The chain runs to 124 residues: Small ribosomal subunit protein uS12cz/uS12cy (124 aa).

This sequence belongs to the universal ribosomal protein uS12 family. Part of the 30S ribosomal subunit.

The protein localises to the plastid. The protein resides in the chloroplast. Functionally, with S4 and S5 plays an important role in translational accuracy. Located at the interface of the 30S and 50S subunits. In Zea mays (Maize), this protein is Small ribosomal subunit protein uS12cz/uS12cy (rps12-A).